Consider the following 191-residue polypeptide: Protein G1-like1 (191 aa).

A disordered region spans residues 1-29; it reads MDMIGMASPAESPGGGGTARPSRYESQKR. The ALOG domain maps to 23–150; it reads RYESQKRRDW…ARGIAYEKKR (128 aa). The Nuclear localization signal motif lies at 148–152; the sequence is KKRRK. Residues 152–179 are a coiled coil; the sequence is KRAAASHTKQKQQQQQLVEQAAAAAEAH.

Belongs to the plant homeotic and developmental regulators ALOG protein family.

It localises to the nucleus. Probable transcription regulator that acts as a developmental regulator by promoting cell growth in response to light. This is Protein G1-like1 from Oryza sativa subsp. indica (Rice).